The chain runs to 378 residues: ATP phosphoribosyltransferase regulatory subunit (378 aa).

Belongs to the class-II aminoacyl-tRNA synthetase family. HisZ subfamily. In terms of assembly, heteromultimer composed of HisG and HisZ subunits.

It is found in the cytoplasm. It participates in amino-acid biosynthesis; L-histidine biosynthesis; L-histidine from 5-phospho-alpha-D-ribose 1-diphosphate: step 1/9. Its function is as follows. Required for the first step of histidine biosynthesis. May allow the feedback regulation of ATP phosphoribosyltransferase activity by histidine. This Brucella abortus (strain 2308) protein is ATP phosphoribosyltransferase regulatory subunit.